Here is a 297-residue protein sequence, read N- to C-terminus: 4-hydroxy-tetrahydrodipicolinate synthase (297 aa).

Threonine 49 contacts pyruvate. The active-site Proton donor/acceptor is the tyrosine 137. Lysine 166 functions as the Schiff-base intermediate with substrate in the catalytic mechanism. Isoleucine 208 provides a ligand contact to pyruvate.

It belongs to the DapA family. As to quaternary structure, homotetramer; dimer of dimers.

It localises to the cytoplasm. The enzyme catalyses L-aspartate 4-semialdehyde + pyruvate = (2S,4S)-4-hydroxy-2,3,4,5-tetrahydrodipicolinate + H2O + H(+). Its pathway is amino-acid biosynthesis; L-lysine biosynthesis via DAP pathway; (S)-tetrahydrodipicolinate from L-aspartate: step 3/4. Functionally, catalyzes the condensation of (S)-aspartate-beta-semialdehyde [(S)-ASA] and pyruvate to 4-hydroxy-tetrahydrodipicolinate (HTPA). This is 4-hydroxy-tetrahydrodipicolinate synthase from Parabacteroides distasonis (strain ATCC 8503 / DSM 20701 / CIP 104284 / JCM 5825 / NCTC 11152).